Reading from the N-terminus, the 741-residue chain is uncharacterized protein (741 aa).

A compositionally biased stretch (polar residues) spans 1–17; sequence MDSNTNENNSHASSNER. The interval 1-50 is disordered; it reads MDSNTNENNSHASSNERQSSEGHDDYLNRNPNSEATEGEEGTHPTTGTQP. The segment covering 18–27 has biased composition (basic and acidic residues); that stretch reads QSSEGHDDYL. An RING-type 1; degenerate zinc finger spans residues 107-150; the sequence is CPICYDDMNENDEKQATKMPCGHIFGKNCLQKWLENHCTCPLCR. Composition is skewed to polar residues over residues 177-193, 252-263, and 277-302; these read GNQGNTAVSQENASNGV, PDSNTSTPTTRS, and NASSRQETTPSDSRPSTLTSLFNAFF. Disordered stretches follow at residues 177–214, 238–387, 500–543, 561–619, 638–688, and 713–741; these read GNQGNTAVSQENASNGVHSDFHPSEELNNANTDGRTGV, SATN…NTNR, QPAV…PGIT, ENRM…TPTH, STPS…PQCQ, and RCQQSTSNSENQMDEEIGECPKCRNEEHK. The segment covering 316 to 332 has biased composition (low complexity); sequence TSNLTSNSGSMTNSTST. Composition is skewed to polar residues over residues 333–344 and 357–386; these read DLPTSNLPSQNA and PPNLLNLPTASPESTSWLPGSQTNIPANTN. Composition is skewed to polar residues over residues 563 to 586, 604 to 619, and 652 to 661; these read RMNQTRSESSTPAQQSAAGSSINV, ENSSEVAGSRNQTPTH, and SKVSSGTSTP. The RING-type 2; degenerate zinc finger occupies 687-736; sequence CQLEDQGICDPNDRFVHFECGHSVHERCQQSTSNSENQMDEEIGECPKCR. Positions 731 to 741 are enriched in basic and acidic residues; that stretch reads ECPKCRNEEHK.

The protein resides in the nucleus. This is an uncharacterized protein from Schizosaccharomyces pombe (strain 972 / ATCC 24843) (Fission yeast).